Consider the following 111-residue polypeptide: WAP four-disulfide core domain protein 12 (111 aa).

A signal peptide spans M1–G23. The region spanning G27–V74 is the WAP domain. Intrachain disulfides connect C34–C62, C41–C66, C49–C61, and C55–C70. The segment at G80–K111 is disordered. Polar residues predominate over residues P101–K111.

It localises to the secreted. In terms of biological role, antibacterial protein. Putative acid-stable proteinase inhibitor. The chain is WAP four-disulfide core domain protein 12 (WFDC12) from Chlorocebus aethiops (Green monkey).